We begin with the raw amino-acid sequence, 210 residues long: Large ribosomal subunit protein uL3 (210 aa).

Residues 125-151 (RHGQSRGPMSHGSRYHRRPGSMGPVAP) form a disordered region.

The protein belongs to the universal ribosomal protein uL3 family. In terms of assembly, part of the 50S ribosomal subunit. Forms a cluster with proteins L14 and L19.

Its function is as follows. One of the primary rRNA binding proteins, it binds directly near the 3'-end of the 23S rRNA, where it nucleates assembly of the 50S subunit. In Bacillus cereus (strain ATCC 14579 / DSM 31 / CCUG 7414 / JCM 2152 / NBRC 15305 / NCIMB 9373 / NCTC 2599 / NRRL B-3711), this protein is Large ribosomal subunit protein uL3.